A 77-amino-acid polypeptide reads, in one-letter code: Cysteine-rich protein 1 (77 aa).

Residues 2-63 enclose the LIM zinc-binding domain; the sequence is PKCPKCNKEV…HPCYAAMFGP (62 aa). 2 positions are modified to N6-acetyllysine: lysine 9 and lysine 22. Arginine 68 carries the post-translational modification Omega-N-methylarginine.

Seems to have a role in zinc absorption and may function as an intracellular zinc transport protein. The chain is Cysteine-rich protein 1 (CRIP1) from Homo sapiens (Human).